The sequence spans 413 residues: Multifunctional CCA protein (413 aa).

Residues Gly8 and Arg11 each coordinate ATP. 2 residues coordinate CTP: Gly8 and Arg11. Mg(2+) is bound by residues Asp21 and Asp23. The ATP site is built by Arg91, Arg141, and Arg144. Residues Arg91, Arg141, and Arg144 each coordinate CTP. One can recognise an HD domain in the interval 230–331 (TGAHLLLVLD…VRLLERCDAL (102 aa)).

This sequence belongs to the tRNA nucleotidyltransferase/poly(A) polymerase family. Bacterial CCA-adding enzyme type 1 subfamily. Monomer. Can also form homodimers and oligomers. Mg(2+) is required as a cofactor. Requires Ni(2+) as cofactor.

It carries out the reaction a tRNA precursor + 2 CTP + ATP = a tRNA with a 3' CCA end + 3 diphosphate. It catalyses the reaction a tRNA with a 3' CCA end + 2 CTP + ATP = a tRNA with a 3' CCACCA end + 3 diphosphate. Catalyzes the addition and repair of the essential 3'-terminal CCA sequence in tRNAs without using a nucleic acid template. Adds these three nucleotides in the order of C, C, and A to the tRNA nucleotide-73, using CTP and ATP as substrates and producing inorganic pyrophosphate. tRNA 3'-terminal CCA addition is required both for tRNA processing and repair. Also involved in tRNA surveillance by mediating tandem CCA addition to generate a CCACCA at the 3' terminus of unstable tRNAs. While stable tRNAs receive only 3'-terminal CCA, unstable tRNAs are marked with CCACCA and rapidly degraded. The polypeptide is Multifunctional CCA protein (Verminephrobacter eiseniae (strain EF01-2)).